A 1029-amino-acid polypeptide reads, in one-letter code: Protein translocase subunit SecA (1029 aa).

Residues Q143, 161–165 (GEGKT), and D661 contribute to the ATP site. Positions 953–1029 (EQEQKKSQVQ…GKKYKNCCGK (77 aa)) are disordered. Composition is skewed to basic and acidic residues over residues 966-975 (LVARHEKAET) and 984-996 (PEGR…ENGK). Zn(2+) contacts are provided by C1015, C1017, C1026, and C1027.

Belongs to the SecA family. As to quaternary structure, monomer and homodimer. Part of the essential Sec protein translocation apparatus which comprises SecA, SecYEG and auxiliary proteins SecDF. Other proteins may also be involved. The cofactor is Zn(2+).

The protein resides in the cell inner membrane. Its subcellular location is the cytoplasm. It carries out the reaction ATP + H2O + cellular proteinSide 1 = ADP + phosphate + cellular proteinSide 2.. Part of the Sec protein translocase complex. Interacts with the SecYEG preprotein conducting channel. Has a central role in coupling the hydrolysis of ATP to the transfer of proteins into and across the cell membrane, serving as an ATP-driven molecular motor driving the stepwise translocation of polypeptide chains across the membrane. The chain is Protein translocase subunit SecA from Chlorobium phaeobacteroides (strain BS1).